The chain runs to 783 residues: Na(+)/H(+) exchanger protein 7 (783 aa).

The chain crosses the membrane as a helical span at residues 1–18; that stretch reads MWIKLLFFFTTLLVSTSG. The Extracellular segment spans residues 19–108; it reads LGDDGITALL…WHWDYVKNEL (90 aa). A helical membrane pass occupies residues 109–129; it reads VLTLFFIVIGLFKLVYHHTFV. Residues 130–132 are Cytoplasmic-facing; it reads TRK. The chain crosses the membrane as a helical span at residues 133–153; it reads ILPESCCLIFIGIAIGFFFVG. Topologically, residues 154 to 159 are extracellular; the sequence is DATHAS. Residues 160–180 traverse the membrane as a helical segment; sequence IKFLEFKSKVFFFYLLPPIIL. Over 181–206 the chain is Cytoplasmic; sequence ESAYSLKDRAFIENIGTILLYAVVGT. The helical transmembrane segment at 207–227 threads the bilayer; it reads ILNIVLLAAALLILIWVGIMG. Over 228–235 the chain is Extracellular; the sequence is KYNLSVMD. Residues 236–256 form a helical membrane-spanning segment; sequence ILTFASLVAAVDPVAVLAVFQ. Topologically, residues 257 to 262 are cytoplasmic; sequence EVGVNK. Residues 263-283 traverse the membrane as a helical segment; sequence MLYFMVFGESLFNDAVTIVCY. Topologically, residues 284–299 are extracellular; sequence NLAIEFQTLPDFTWYH. The helical transmembrane segment at 300 to 320 threads the bilayer; the sequence is GFLGLLSFLCVSIGGLIIGLI. The Cytoplasmic segment spans residues 321–350; it reads CGAISSFVTKFTTDVRVVEPVVLFGMAYLA. The chain crosses the membrane as a helical span at residues 351-371; it reads YLGSEMFHFSGIIALIACGLF. The Extracellular segment spans residues 372–390; the sequence is QTHYACCNISYKSFTSVMY. A glycan (N-linked (GlcNAc...) asparagine) is linked at Asn379. Residues 391 to 411 constitute an intramembrane region (helical); sequence ITKVCSTLCESLIFIILGVML. Over 412–424 the chain is Extracellular; it reads VNEREWFWTDWHP. The chain crosses the membrane as a helical span at residues 425 to 445; the sequence is VFSAVSVVLCVVVRFGVTFFL. Over 446–464 the chain is Cytoplasmic; the sequence is TYFVNQFTGGVRHISFQEQ. A helical transmembrane segment spans residues 465–485; it reads FIMSYGGLRGAVSFSLVFMIS. Topologically, residues 486–492 are extracellular; sequence ANPDVKN. Residues 493–513 form a helical membrane-spanning segment; it reads TMLGATYAVILFTNIIQGSTI. Residues 514–783 lie on the Cytoplasmic side of the membrane; the sequence is KLFVKWLNIR…TITESEETSF (270 aa). Residues 649–702 adopt a coiled-coil conformation; it reads DNEDADQRANELIKDVSSIRQLMHNPFEDCYLDRNLTHEEEKEQARLKMKKTRA. Residues 745–783 are disordered; the sequence is RPSTSTRVSVEDEEQGLTMKEMEEEHPLMTITESEETSF.

Belongs to the monovalent cation:proton antiporter 1 (CPA1) transporter (TC 2.A.36) family. In terms of assembly, interacts (via C-terminus) with cmd-1. In terms of tissue distribution, detected in the posterior cells of the intestine.

It localises to the basolateral cell membrane. Na+/H+ exchanger which mediates the transient acidification of the coelomic space and plays a role in contraction of posterior body muscles during defecation. Probably by regulating the defecation motor program, required for fatty acid uptake by intestinal cells. The sequence is that of Na(+)/H(+) exchanger protein 7 from Caenorhabditis elegans.